A 142-amino-acid chain; its full sequence is Large ribosomal subunit protein uL13 (142 aa).

Belongs to the universal ribosomal protein uL13 family. As to quaternary structure, part of the 50S ribosomal subunit.

Its function is as follows. This protein is one of the early assembly proteins of the 50S ribosomal subunit, although it is not seen to bind rRNA by itself. It is important during the early stages of 50S assembly. In Shewanella amazonensis (strain ATCC BAA-1098 / SB2B), this protein is Large ribosomal subunit protein uL13.